Here is a 604-residue protein sequence, read N- to C-terminus: Nuclear factor erythroid 2-related factor 2 (604 aa).

A DLG motif motif is present at residues 29-31 (DLG). S40 carries the post-translational modification Phosphoserine; by PKC. Residues 79–82 (ETGE) carry the ETGE motif motif. S214 bears the Phosphoserine mark. The disordered stretch occupies residues 334–447 (TVEFNDSDSG…VPFTKDKHSS (114 aa)). Composition is skewed to polar residues over residues 340–352 (SDSG…SPSR) and 395–407 (PTHS…QPLS). N-linked (Glc) (glycation) lysine glycosylation is found at K461, K471, and K486. In terms of domain architecture, bZIP spans 496-559 (LIRDIRRRGK…HLLKRKLSTL (64 aa)). The N-linked (Glc) (glycation) arginine glycan is linked to R498. The tract at residues 498–517 (RDIRRRGKNKVAAQNCRKRK) is basic motif. The interval 521-528 (IVELEQDL) is leucine-zipper. The N-linked (Glc) (glycation) arginine glycan is linked to R568. Positions 570-604 (EDGKPYSPSEYSLQQTRDGNVFLVPKSKKPDTKKN) are disordered. The N-linked (Glc) (glycation) lysine glycan is linked to K573. A compositionally biased stretch (polar residues) spans 578–587 (SEYSLQQTRD). A mediates interaction with CHD6 and is necessary to activate transcription region spans residues 590 to 595 (VFLVPK). N6-acetyllysine; by CREBBP is present on residues K595 and K598.

This sequence belongs to the bZIP family. CNC subfamily. Heterodimer; heterodimerizes with small Maf proteins. Interacts (via the bZIP domain) with MAFG and MAFK; required for binding to antioxidant response elements (AREs) on DNA. Interacts with KEAP1; the interaction is direct and promotes ubiquitination by the BCR(KEAP1) E3 ubiquitin ligase complex. Forms a ternary complex with PGAM5 and KEAP1. Interacts with EEF1D at heat shock promoter elements (HSE). Interacts via its leucine-zipper domain with the coiled-coil domain of PMF1. Interacts with CHD6; involved in activation of the transcription. Interacts with ESRRB; represses NFE2L2 transcriptional activity. Interacts with MOTS-c, a peptide produced by the mitochondrially encoded 12S rRNA MT-RNR1; the interaction occurs in the nucleus following metabolic stress. Post-translationally, ubiquitinated in the cytoplasm by the BCR(KEAP1) E3 ubiquitin ligase complex leading to its degradation. In response to oxidative stress, electrophile metabolites, such as sulforaphane, modify KEAP1, leading to inhibit activity of the BCR(KEAP1) complex, promoting NFE2L2/NRF2 nuclear accumulation and activity. In response to autophagy, the BCR(KEAP1) complex is inactivated. In terms of processing, phosphorylated by EIF2AK3/PERK following unfolded protein response (UPR), promoting dissociation from its cytoplasmic inhibitor KEAP1, followed by its translocation into the nucleus. Phosphorylation of Ser-40 by PKC in response to oxidative stress dissociates NFE2L2 from its cytoplasmic inhibitor KEAP1, promoting its translocation into the nucleus. Acetylation at Lys-595 and Lys-598 increases nuclear localization whereas deacetylation by SIRT1 enhances cytoplasmic presence. Post-translationally, glycation impairs transcription factor activity by preventing heterodimerization with small Maf proteins. Deglycation by FN3K restores activity.

It localises to the cytoplasm. The protein resides in the cytosol. Its subcellular location is the nucleus. Functionally, transcription factor that plays a key role in the response to oxidative stress: binds to antioxidant response (ARE) elements present in the promoter region of many cytoprotective genes, such as phase 2 detoxifying enzymes, and promotes their expression, thereby neutralizing reactive electrophiles. In normal conditions, ubiquitinated and degraded in the cytoplasm by the BCR(KEAP1) complex. In response to oxidative stress, electrophile metabolites inhibit activity of the BCR(KEAP1) complex, promoting nuclear accumulation of NFE2L2/NRF2, heterodimerization with one of the small Maf proteins and binding to ARE elements of cytoprotective target genes. The NFE2L2/NRF2 pathway is also activated in response to selective autophagy: autophagy promotes interaction between KEAP1 and SQSTM1/p62 and subsequent inactivation of the BCR(KEAP1) complex, leading to NFE2L2/NRF2 nuclear accumulation and expression of cytoprotective genes. The NFE2L2/NRF2 pathway is also activated during the unfolded protein response (UPR), contributing to redox homeostasis and cell survival following endoplasmic reticulum stress. May also be involved in the transcriptional activation of genes of the beta-globin cluster by mediating enhancer activity of hypersensitive site 2 of the beta-globin locus control region. Also plays an important role in the regulation of the innate immune response. It is a critical regulator of the innate immune response and survival during sepsis by maintaining redox homeostasis and restraint of the dysregulation of pro-inflammatory signaling pathways like MyD88-dependent and -independent and TNF-alpha signaling. Suppresses macrophage inflammatory response by blocking pro-inflammatory cytokine transcription and the induction of IL6. Binds to the proximity of pro-inflammatory genes in macrophages and inhibits RNA Pol II recruitment. The inhibition is independent of the Nrf2-binding motif and reactive oxygen species level. Represses antiviral cytosolic DNA sensing by suppressing the expression of the adapter protein STING1 and decreasing responsiveness to STING1 agonists while increasing susceptibility to infection with DNA viruses. In Rattus norvegicus (Rat), this protein is Nuclear factor erythroid 2-related factor 2.